The sequence spans 387 residues: Xylose isomerase (387 aa).

Catalysis depends on residues His-54 and Asp-57. Glu-181, Glu-217, His-220, Asp-245, Asp-255, Asp-257, and Asp-287 together coordinate Mg(2+).

The protein belongs to the xylose isomerase family. Homotetramer. Mg(2+) is required as a cofactor.

The protein localises to the cytoplasm. It catalyses the reaction alpha-D-xylose = alpha-D-xylulofuranose. The protein is Xylose isomerase of Streptomyces coelicolor (strain ATCC BAA-471 / A3(2) / M145).